Consider the following 422-residue polypeptide: Enolase (422 aa).

Gln162 contributes to the (2R)-2-phosphoglycerate binding site. Glu204 functions as the Proton donor in the catalytic mechanism. Positions 241, 284, and 311 each coordinate Mg(2+). (2R)-2-phosphoglycerate-binding residues include Lys336, Arg365, Ser366, and Lys387. Catalysis depends on Lys336, which acts as the Proton acceptor.

This sequence belongs to the enolase family. In terms of assembly, component of the RNA degradosome, a multiprotein complex involved in RNA processing and mRNA degradation. Requires Mg(2+) as cofactor.

The protein resides in the cytoplasm. The protein localises to the secreted. It localises to the cell surface. It carries out the reaction (2R)-2-phosphoglycerate = phosphoenolpyruvate + H2O. Its pathway is carbohydrate degradation; glycolysis; pyruvate from D-glyceraldehyde 3-phosphate: step 4/5. Catalyzes the reversible conversion of 2-phosphoglycerate (2-PG) into phosphoenolpyruvate (PEP). It is essential for the degradation of carbohydrates via glycolysis. The polypeptide is Enolase (Legionella pneumophila (strain Lens)).